Here is a 314-residue protein sequence, read N- to C-terminus: Ribosomal RNA small subunit methyltransferase A (314 aa).

Residues N29, V31, G56, E77, D107, and N126 each coordinate S-adenosyl-L-methionine. Residues 291 to 314 (PKADDAGDDADAQAKADGAQVSTL) form a disordered region. Low complexity predominate over residues 303–314 (QAKADGAQVSTL).

It belongs to the class I-like SAM-binding methyltransferase superfamily. rRNA adenine N(6)-methyltransferase family. RsmA subfamily.

Its subcellular location is the cytoplasm. The enzyme catalyses adenosine(1518)/adenosine(1519) in 16S rRNA + 4 S-adenosyl-L-methionine = N(6)-dimethyladenosine(1518)/N(6)-dimethyladenosine(1519) in 16S rRNA + 4 S-adenosyl-L-homocysteine + 4 H(+). Its function is as follows. Specifically dimethylates two adjacent adenosines (A1518 and A1519) in the loop of a conserved hairpin near the 3'-end of 16S rRNA in the 30S particle. May play a critical role in biogenesis of 30S subunits. The sequence is that of Ribosomal RNA small subunit methyltransferase A from Mycolicibacterium gilvum (strain PYR-GCK) (Mycobacterium gilvum (strain PYR-GCK)).